The sequence spans 259 residues: UPF0246 protein PLES_14941 (259 aa).

This sequence belongs to the UPF0246 family.

This chain is UPF0246 protein PLES_14941, found in Pseudomonas aeruginosa (strain LESB58).